The sequence spans 212 residues: Imidazole glycerol phosphate synthase subunit HisH (212 aa).

The 211-residue stretch at 2-212 (RVVVIDYNGG…ILGNFLRWTS (211 aa)) folds into the Glutamine amidotransferase type-1 domain. The Nucleophile role is filled by cysteine 85. Catalysis depends on residues histidine 192 and glutamate 194.

Heterodimer of HisH and HisF.

The protein resides in the cytoplasm. It carries out the reaction 5-[(5-phospho-1-deoxy-D-ribulos-1-ylimino)methylamino]-1-(5-phospho-beta-D-ribosyl)imidazole-4-carboxamide + L-glutamine = D-erythro-1-(imidazol-4-yl)glycerol 3-phosphate + 5-amino-1-(5-phospho-beta-D-ribosyl)imidazole-4-carboxamide + L-glutamate + H(+). The enzyme catalyses L-glutamine + H2O = L-glutamate + NH4(+). It functions in the pathway amino-acid biosynthesis; L-histidine biosynthesis; L-histidine from 5-phospho-alpha-D-ribose 1-diphosphate: step 5/9. In terms of biological role, IGPS catalyzes the conversion of PRFAR and glutamine to IGP, AICAR and glutamate. The HisH subunit catalyzes the hydrolysis of glutamine to glutamate and ammonia as part of the synthesis of IGP and AICAR. The resulting ammonia molecule is channeled to the active site of HisF. This chain is Imidazole glycerol phosphate synthase subunit HisH, found in Gluconobacter oxydans (strain 621H) (Gluconobacter suboxydans).